A 753-amino-acid polypeptide reads, in one-letter code: Bile salt-activated lipase (753 aa).

The first 20 residues, 1 to 20 (MGRLQLVVLGLTCCWAVASA), serve as a signal peptide directing secretion. Residues 21 to 121 (AKLGAVYTEG…KQVSRDLPVM (101 aa)) form a heparin-binding region. Cys84 and Cys100 are disulfide-bonded. Asn207 is a glycosylation site (N-linked (GlcNAc...) (complex) asparagine). The Acyl-ester intermediate role is filled by Ser214. Cys266 and Cys277 are disulfide-bonded. Residues Asp340 and His455 each act as charge relay system in the active site. Positions 555–753 (QEATPVPPTG…EAQMPAVIRF (199 aa)) are disordered. Thr558, Thr569, and Thr579 each carry an O-linked (GalNAc...) threonine glycan. 17 tandem repeats follow at residues 559–569 (PVPPTGDSEAT), 570–580 (PVPPTGDSETA), 581–591 (PVPPTGDSGAP), 592–602 (PVPPTGDSGAP), 603–613 (PVPPTGDSGAP), 614–624 (PVPPTGDSGAP), 625–635 (PVPPTGDSGAP), 636–646 (PVPPTGDSGAP), 647–657 (PVPPTGDSGAP), 658–668 (PVPPTGDSGAP), 669–679 (PVPPTGDAGPP), 680–690 (PVPPTGDSGAP), 691–701 (PVPPTGDSGAP), 702–712 (PVTPTGDSETA), 713–723 (PVPPTGDSGAP), 724–734 (PVPPTGDSEAA), and 735–745 (PVPPTDDSKEA). The segment at 559 to 745 (PVPPTGDSEA…VPPTDDSKEA (187 aa)) is 17 X 11 AA tandem repeats, glycodomain, O-linked (mucin type). O-linked (GalNAc...) threonine glycans are attached at residues Thr607, Thr618, Thr629, Thr640, Thr651, Thr662, and Thr673. A compositionally biased stretch (pro residues) spans 668–683 (PPVPPTGDAGPPPVPP).

This sequence belongs to the type-B carboxylesterase/lipase family. In terms of assembly, interacts with CLC. Post-translationally, N- and O-glycosylated. As to expression, mammary gland and pancreas. Detected in pancreatic and duodenal juice (at protein level). Expressed by eosinophils.

It is found in the secreted. It carries out the reaction a triacylglycerol + H2O = a diacylglycerol + a fatty acid + H(+). The enzyme catalyses 1,2,3-tri-(9Z-octadecenoyl)-glycerol + H2O = di-(9Z)-octadecenoylglycerol + (9Z)-octadecenoate + H(+). It catalyses the reaction 1,2,3-trioctanoylglycerol + H2O = dioctanoylglycerol + octanoate + H(+). The catalysed reaction is a sterol ester + H2O = a sterol + a fatty acid + H(+). It carries out the reaction cholesteryl (9Z-octadecenoate) + H2O = cholesterol + (9Z)-octadecenoate + H(+). The enzyme catalyses an acetyl ester + H2O = an aliphatic alcohol + acetate + H(+). It catalyses the reaction a butanoate ester + H2O = an aliphatic alcohol + butanoate + H(+). The catalysed reaction is 9-hexadecanoyloxy-octadecanoate + H2O = 9-hydroxy-octadecanoate + hexadecanoate + H(+). It carries out the reaction 9-(9Z-octadecenoyloxy)-octadecanoate + H2O = 9-hydroxy-octadecanoate + (9Z)-octadecenoate + H(+). The enzyme catalyses 1-hexadecanoyl-sn-glycero-3-phosphocholine + H2O = sn-glycerol 3-phosphocholine + hexadecanoate + H(+). It catalyses the reaction 12-hexadecanoyloxy-octadecanoate + H2O = 12-hydroxyoctadecanoate + hexadecanoate + H(+). The catalysed reaction is 12-(9Z-octadecenoyloxy)-octadecanoate + H2O = 12-hydroxyoctadecanoate + (9Z)-octadecenoate + H(+). It carries out the reaction 13-(9Z-octadecenoyloxy)-octadecanoate + H2O = 13-hydroxy-octadecanoate + (9Z)-octadecenoate + H(+). The enzyme catalyses 9-(9Z-hexadecenoyloxy)-octadecanoate + H2O = (9Z)-hexadecenoate + 9-hydroxy-octadecanoate + H(+). It catalyses the reaction 12-(9Z-hexadecenoyloxy)-octadecanoate + H2O = 12-hydroxyoctadecanoate + (9Z)-hexadecenoate + H(+). The catalysed reaction is 13-(9Z-hexadecenoyloxy)-octadecanoate + H2O = 13-hydroxy-octadecanoate + (9Z)-hexadecenoate + H(+). It carries out the reaction 12-octadecanoyloxy-octadecanoate + H2O = 12-hydroxyoctadecanoate + octadecanoate + H(+). The enzyme catalyses 13-octadecanoyloxy-octadecanoate + H2O = 13-hydroxy-octadecanoate + octadecanoate + H(+). It catalyses the reaction 5-(9Z-hexadecenoyloxy)-octadecanoate + H2O = 5-hydroxy-octadecanoate + (9Z)-hexadecenoate + H(+). The catalysed reaction is 9-octadecanoyloxy-octadecanoate + H2O = 9-hydroxy-octadecanoate + octadecanoate + H(+). Its activity is regulated as follows. Activated by bile salts such as sodium taurocholate. Catalyzes the hydrolysis of a wide range of substrates including cholesteryl esters, phospholipids, lysophospholipids, di- and tri-acylglycerols, and fatty acid esters of hydroxy fatty acids (FAHFAs). Preferentially hydrolyzes FAHFAs with the ester bond further away from the carboxylate. Unsaturated FAHFAs are hydrolyzed more quickly than saturated FAHFAs. Has an essential role in the complete digestion of dietary lipids and their intestinal absorption, along with the absorption of fat-soluble vitamins. This chain is Bile salt-activated lipase (CEL), found in Homo sapiens (Human).